The sequence spans 467 residues: Argininosuccinate lyase (467 aa).

Belongs to the lyase 1 family. Argininosuccinate lyase subfamily.

The protein resides in the cytoplasm. The catalysed reaction is 2-(N(omega)-L-arginino)succinate = fumarate + L-arginine. The protein operates within amino-acid biosynthesis; L-arginine biosynthesis; L-arginine from L-ornithine and carbamoyl phosphate: step 3/3. This Rhizobium johnstonii (strain DSM 114642 / LMG 32736 / 3841) (Rhizobium leguminosarum bv. viciae) protein is Argininosuccinate lyase.